Here is a 378-residue protein sequence, read N- to C-terminus: MVTLMNTYGDMFRVTVFGESHGKAVGAVVDGCPANLPLSEEDIQKELDRRRPGQSIFSTPRKEEDKVEILSGIFEGKTTGAPICSIVYNKNMRPKDYSKIKDTPRPGHADLTYRLKYKNYDYRGGGRASGRVTIGHVIGGAIAKKLLSYTYNIKIIGYTIKIGKIEGDFSYYKNPEVFENEKSLERLIEIIESNPLRCPSMNEKEMEEYVLKAMENKDSVGGVVEIVALNVPVGVGNPIFNKLNGELARALMSINAVKGVEIGAGFKAAEMYGSEMNDEMYFDDDKNIRFKTNNCGGILGGISCGTPIVLRIAVKPTPSIGKKQKTINLKTLENVEIEIEGRHDPVIVPRIVPVAEAMVAITLADLMIKGGFIHPCSL.

Arg50 contacts NADP(+). Residues 127-129 (RAS), 255-256 (NA), Gly300, 315-319 (KPTPS), and Arg342 each bind FMN.

Belongs to the chorismate synthase family. The cofactor is FMNH2.

It catalyses the reaction 5-O-(1-carboxyvinyl)-3-phosphoshikimate = chorismate + phosphate. The protein operates within metabolic intermediate biosynthesis; chorismate biosynthesis; chorismate from D-erythrose 4-phosphate and phosphoenolpyruvate: step 7/7. Catalyzes the anti-1,4-elimination of the C-3 phosphate and the C-6 proR hydrogen from 5-enolpyruvylshikimate-3-phosphate (EPSP) to yield chorismate, which is the branch point compound that serves as the starting substrate for the three terminal pathways of aromatic amino acid biosynthesis. This reaction introduces a second double bond into the aromatic ring system. In Methanocaldococcus jannaschii (strain ATCC 43067 / DSM 2661 / JAL-1 / JCM 10045 / NBRC 100440) (Methanococcus jannaschii), this protein is Chorismate synthase.